The chain runs to 124 residues: MTRVKRGIVARKRRKKILNYTKGFRGAASKLFRTANQRYMKALKLSFVNRRKKKRDFRSLWISRLNAAVRKNGLNYNEFIFALKICNINLNRKTLSQISICDPQTFNLLYDTLKPLLIKHLNTK.

This sequence belongs to the bacterial ribosomal protein bL20 family.

It is found in the plastid. Its subcellular location is the chloroplast. Its function is as follows. Binds directly to 23S ribosomal RNA and is necessary for the in vitro assembly process of the 50S ribosomal subunit. It is not involved in the protein synthesizing functions of that subunit. This chain is Large ribosomal subunit protein bL20c, found in Stigeoclonium helveticum (Green alga).